A 392-amino-acid polypeptide reads, in one-letter code: THO complex subunit MFT1 (392 aa).

2 stretches are compositionally biased toward acidic residues: residues 258-271 and 290-330; these read DNIDEDYESDEDEE and NVDE…EVDG. Positions 258 to 392 are disordered; the sequence is DNIDEDYESD…SASSSVEEVK (135 aa). Phosphoserine is present on Ser-266. The segment covering 331–344 has biased composition (polar residues); that stretch reads ESSQQEDNSRQGNN. A compositionally biased stretch (acidic residues) spans 345-367; sequence EETDKETGVIEEPDAVNDAEEAD. The segment covering 377–392 has biased composition (polar residues); the sequence is GTTSDFSASSSVEEVK.

Component of the THO complex, which is composed of HPR1, MFT1, THO2 and THP2. Together with SUB2, TEX1 and YRA1, THO forms the transcription/export (TREX) complex. THO associates with DNA and RNA in vitro.

Its subcellular location is the nucleus. Its function is as follows. Component the THO subcomplex of the TREX complex, which operates in coupling transcription elongation to mRNA export. The THO complex is recruited to transcribed genes and moves along the gene with the elongating polymerase during transcription. THO is important for stabilizing nascent RNA in the RNA polymerase II elongation complex by preventing formation of DNA:RNA hybrids behind the elongating polymerase. It functions in cotranscriptional formation of an export-competent messenger ribonucleoprotein particle (mRNP) by facilitating the loading of ATP-dependent RNA helicase SUB2 and the mRNA export factor YRA1 along the nascent mRNA. This Saccharomyces cerevisiae (strain ATCC 204508 / S288c) (Baker's yeast) protein is THO complex subunit MFT1 (MFT1).